A 129-amino-acid chain; its full sequence is Cytochrome c-type protein SHP (129 aa).

An N-terminal signal peptide occupies residues methionine 1–alanine 17. The heme c site is built by cysteine 60, cysteine 63, and histidine 64. A disulfide bridge connects residues cysteine 106 and cysteine 114.

In terms of processing, binds 1 heme c group covalently per subunit.

High-spin cytochrome. Transiently bind oxygen during autoxidation, which occurs with a half-life of 3 minutes with a 4-fold excess of O(2). Also binds carbon monoxide, azide and cyanide. This chain is Cytochrome c-type protein SHP (shp), found in Cereibacter sphaeroides (strain ATCC 17023 / DSM 158 / JCM 6121 / CCUG 31486 / LMG 2827 / NBRC 12203 / NCIMB 8253 / ATH 2.4.1.) (Rhodobacter sphaeroides).